The following is a 259-amino-acid chain: MMSFVISDEFLGTFVPILVYWVYSGMYICLGSLDKYRLHSKIDEDEKNLVSKSAVVKGVLLQQTLQAIISVILFKITGSDADAATTQQFSILLLARQFIIAMLVIDTWQYFIHRYMHLNKFLYKHIHSQHHRLIVPYSYGALYNHPLEGLLLDTIGGALSFLFSGMSPRTAIFFFSFATIKTVDDHCGLWLPGNPFHIFFSNNSAYHDVHHQLYGTKYNFSQPFFVMWDRILGTYLPYSLEKRANGGFETRPIKVSKDE.

A run of 3 helical transmembrane segments spans residues 10–30, 54–74, and 91–111; these read FLGTFVPILVYWVYSGMYICL, AVVKGVLLQQTLQAIISVILF, and ILLLARQFIIAMLVIDTWQYF. The Fatty acid hydroxylase domain maps to 98 to 234; that stretch reads FIIAMLVIDT…FVMWDRILGT (137 aa). The Histidine box-1 motif lies at 113–117; that stretch reads HRYMH. The short motif at 127–131 is the Histidine box-2 element; the sequence is HSQHH. The Histidine box-3 signature appears at 206–212; sequence YHDVHHQ.

Belongs to the sterol desaturase family. Fe cation is required as a cofactor. As to expression, ubiquitous, with higher levels in flowers and roots.

The protein resides in the endoplasmic reticulum membrane. The catalysed reaction is a dihydroceramide + 2 Fe(II)-[cytochrome b5] + O2 + 2 H(+) = a phytoceramide + 2 Fe(III)-[cytochrome b5] + H2O. The protein operates within membrane lipid metabolism; sphingolipid biosynthesis. Functionally, involved in sphingolipid trihydroxy long-chain base (4-hydroxysphinganine) biosynthesis. Can use C18- and C20-sphinganine as substrates to produce C18- and C20-phytosphinganines (D-ribo-2-amino-1,3,4-trihydroxyoctadecane and -eicosane). This Arabidopsis thaliana (Mouse-ear cress) protein is Sphinganine C4-monooxygenase 2 (SBH2).